We begin with the raw amino-acid sequence, 384 residues long: DNA replication and repair protein RecF (384 aa).

30-37 (GENAQGKT) is a binding site for ATP.

It belongs to the RecF family.

It localises to the cytoplasm. In terms of biological role, the RecF protein is involved in DNA metabolism; it is required for DNA replication and normal SOS inducibility. RecF binds preferentially to single-stranded, linear DNA. It also seems to bind ATP. The protein is DNA replication and repair protein RecF of Levilactobacillus brevis (strain ATCC 367 / BCRC 12310 / CIP 105137 / JCM 1170 / LMG 11437 / NCIMB 947 / NCTC 947) (Lactobacillus brevis).